We begin with the raw amino-acid sequence, 184 residues long: Adenylate kinase 1 (184 aa).

ATP is bound at residue 11–16 (GAGKGT). Positions 31–60 (STGDILRQAMKEQTPLGIKAQSYVDSGELV) are NMP. Residues Thr32, Arg37, 58 to 60 (ELV), 86 to 89 (GFPR), and Gln93 each bind AMP. An LID region spans residues 127–133 (SRGRKDD). Arg128 serves as a coordination point for ATP. 2 residues coordinate AMP: Arg130 and Arg141. An ATP-binding site is contributed by Gln169.

It belongs to the adenylate kinase family. As to quaternary structure, monomer.

Its subcellular location is the cytoplasm. It carries out the reaction AMP + ATP = 2 ADP. Its pathway is purine metabolism; AMP biosynthesis via salvage pathway; AMP from ADP: step 1/1. Functionally, catalyzes the reversible transfer of the terminal phosphate group between ATP and AMP. Plays an important role in cellular energy homeostasis and in adenine nucleotide metabolism. In Nostoc sp. (strain PCC 7120 / SAG 25.82 / UTEX 2576), this protein is Adenylate kinase 1.